The chain runs to 537 residues: Putative cysteine ligase BshC (537 aa).

This sequence belongs to the BshC family.

In terms of biological role, involved in bacillithiol (BSH) biosynthesis. May catalyze the last step of the pathway, the addition of cysteine to glucosamine malate (GlcN-Mal) to generate BSH. The polypeptide is Putative cysteine ligase BshC (Staphylococcus saprophyticus subsp. saprophyticus (strain ATCC 15305 / DSM 20229 / NCIMB 8711 / NCTC 7292 / S-41)).